The primary structure comprises 301 residues: Mitochondrial ornithine transporter 1 (301 aa).

The next 6 helical transmembrane spans lie at 5 to 25, 68 to 88, 110 to 130, 168 to 188, 207 to 227, and 237 to 257; these read PAIQAAIDLTAGAAGGTACVL, SPALIANIAENSVLFMCYGFC, AAAGSFASAFAALVLCPTELV, GFYHGLSSTLLREVPGYFFFF, LGPVPLMLSGGFGGICLWLAV, and IQVLSMTGKQTGLVRTFLSIV. 3 Solcar repeats span residues 7-91, 104-197, and 207-293; these read IQAA…CQQV, LSDL…SRSF, and LGPV…SRKL.

The protein belongs to the mitochondrial carrier (TC 2.A.29) family. In terms of tissue distribution, widely expressed, with highest levels in the liver, testis and kidney. In the brain, expressed at high levels in the hypothalamus.

The protein resides in the mitochondrion inner membrane. The protein localises to the mitochondrion membrane. The catalysed reaction is L-citrulline(in) + L-ornithine(out) + H(+)(in) = L-citrulline(out) + L-ornithine(in) + H(+)(out). It catalyses the reaction L-ornithine(in) + L-arginine(out) = L-ornithine(out) + L-arginine(in). It carries out the reaction L-ornithine(out) + L-lysine(in) = L-ornithine(in) + L-lysine(out). The enzyme catalyses L-lysine(out) + H(+)(in) = L-lysine(in) + H(+)(out). The catalysed reaction is L-ornithine(out) + H(+)(in) = L-ornithine(in) + H(+)(out). Its activity is regulated as follows. Inhibited by pyridoxal 5'-phosphate as well as by mercurials (mersalyl, p-chloromercuribenzene sulfonate, and mercuric chloride), N-ethylmaleimide and spermine. In terms of biological role, mitochondrial ornithine-citrulline antiporter. Catalyzes the exchange between cytosolic ornithine and mitochondrial citrulline plus an H(+), the proton compensates the positive charge of ornithine thus leading to an electroneutral transport. Plays a crucial role in the urea cycle, by connecting the cytosolic and the intramitochondrial reactions of the urea cycle. Lysine and arginine are also transported by the antiport mechanism. In addition, catalyzes an electroneutral exchange of ornithine or lysine for H(+), a reaction driven by the pH gradient across the inner membrane. This Mus musculus (Mouse) protein is Mitochondrial ornithine transporter 1.